A 174-amino-acid chain; its full sequence is Gamma-crystallin D (174 aa).

Beta/gamma crystallin 'Greek key' domains follow at residues 2–40 (GKITFYEDRGFQGRHYECSTDHSNLQPYFSRCNSVRVDS) and 41–83 (GCWM…RLIP). Residues 84–87 (HAGS) are connecting peptide. Beta/gamma crystallin 'Greek key' domains follow at residues 88–128 (HRIR…NVLE) and 129–171 (GCWV…RRVM).

Belongs to the beta/gamma-crystallin family. Detected in the superior olivary complex and fibers of the ventral aoustic stria of the auditory hindbrain.

Functionally, crystallins are the dominant structural components of the vertebrate eye lens. This chain is Gamma-crystallin D (Crygd), found in Rattus norvegicus (Rat).